Consider the following 61-residue polypeptide: Large ribosomal subunit protein uL30 (61 aa).

The protein belongs to the universal ribosomal protein uL30 family. Part of the 50S ribosomal subunit.

The polypeptide is Large ribosomal subunit protein uL30 (Thermobifida fusca (strain YX)).